The sequence spans 431 residues: Tol-Pal system protein TolB (431 aa).

The N-terminal stretch at 1 to 26 (MSLMTKLGFRALVASCLITAGSAANA) is a signal peptide. The interval 406-431 (DGSAPPQILSVQGGSVREPSWGPFMQ) is disordered.

It belongs to the TolB family. The Tol-Pal system is composed of five core proteins: the inner membrane proteins TolA, TolQ and TolR, the periplasmic protein TolB and the outer membrane protein Pal. They form a network linking the inner and outer membranes and the peptidoglycan layer.

The protein localises to the periplasm. Part of the Tol-Pal system, which plays a role in outer membrane invagination during cell division and is important for maintaining outer membrane integrity. In Burkholderia orbicola (strain MC0-3), this protein is Tol-Pal system protein TolB.